We begin with the raw amino-acid sequence, 290 residues long: Manganese efflux system protein MneS (290 aa).

Helical transmembrane passes span 15 to 35 (LVSI…GYLF), 39 to 61 (ALTA…LIGL), 82 to 102 (IASL…LFSA), 113 to 133 (TPDM…LIVY), 159 to 179 (AFVS…LAWI), and 181 to 201 (TVTA…IFKE).

This sequence belongs to the cation diffusion facilitator (CDF) transporter (TC 2.A.4) family.

It localises to the cell membrane. In terms of biological role, secondary manganese efflux system. May prevent manganese intoxication. This chain is Manganese efflux system protein MneS, found in Bacillus subtilis (strain 168).